A 347-amino-acid polypeptide reads, in one-letter code: Major capsid protein (347 aa).

Belongs to the T7virus major capsid protein family. As to quaternary structure, homohexamer. Interacts with the connector protein and the minor capsid protein. Interacts with the capsid assembly scaffolding protein; capsid proteins and scaffolding proteins form building blocks that assemble to form the procapsid, each hexamer of the major capsid protein interacting with 2 scaffolding proteins.

Its subcellular location is the virion. Its function is as follows. Assembles with the minor capsid protein to form an icosahedral capsid with a T=7 symmetry, about 60 nm in diameter, and consisting of 415 capsid proteins. The major and minor capsid proteins are incorporated into the capsid in about a 90/10 ratio respectively. Once the capsid formed, encapsidates one single copy of the viral genome. This is Major capsid protein (10) from Escherichia coli (Bacteriophage T3).